Reading from the N-terminus, the 304-residue chain is tRNA dimethylallyltransferase (304 aa).

16–23 (GPTASGKS) provides a ligand contact to ATP. 18 to 23 (TASGKS) is a substrate binding site. 2 interaction with substrate tRNA regions span residues 41–44 (DSMQ) and 165–169 (QRIIR).

It belongs to the IPP transferase family. In terms of assembly, monomer. Mg(2+) is required as a cofactor.

The enzyme catalyses adenosine(37) in tRNA + dimethylallyl diphosphate = N(6)-dimethylallyladenosine(37) in tRNA + diphosphate. Its function is as follows. Catalyzes the transfer of a dimethylallyl group onto the adenine at position 37 in tRNAs that read codons beginning with uridine, leading to the formation of N6-(dimethylallyl)adenosine (i(6)A). The sequence is that of tRNA dimethylallyltransferase from Allorhizobium ampelinum (strain ATCC BAA-846 / DSM 112012 / S4) (Agrobacterium vitis (strain S4)).